The primary structure comprises 275 residues: NH(3)-dependent NAD(+) synthetase (275 aa).

ATP is bound at residue 50-57; sequence GISGGVDS. Asp56 serves as a coordination point for Mg(2+). Position 147 (Arg147) interacts with deamido-NAD(+). An ATP-binding site is contributed by Thr167. Glu172 is a Mg(2+) binding site. 2 residues coordinate deamido-NAD(+): Lys180 and Asp187. Residues Lys196 and Thr218 each coordinate ATP. Position 267 to 268 (267 to 268) interacts with deamido-NAD(+); sequence HK.

Belongs to the NAD synthetase family. Homodimer.

It catalyses the reaction deamido-NAD(+) + NH4(+) + ATP = AMP + diphosphate + NAD(+) + H(+). It participates in cofactor biosynthesis; NAD(+) biosynthesis; NAD(+) from deamido-NAD(+) (ammonia route): step 1/1. Catalyzes the ATP-dependent amidation of deamido-NAD to form NAD. Uses ammonia as a nitrogen source. This chain is NH(3)-dependent NAD(+) synthetase, found in Ectopseudomonas mendocina (strain ymp) (Pseudomonas mendocina).